The sequence spans 197 residues: uncharacterized protein (197 aa).

A signal peptide spans 1 to 19; the sequence is MKLASLLVGSLMLAVPALA.

It localises to the secreted. This is an uncharacterized protein from Arthroderma benhamiae (strain ATCC MYA-4681 / CBS 112371) (Trichophyton mentagrophytes).